The following is an 824-amino-acid chain: Lon protease (824 aa).

The disordered stretch occupies residues 1–23 (MNEPMSLFDDLPEEHDEPQEAPE). Over residues 10 to 20 (DLPEEHDEPQE) the composition is skewed to acidic residues. One can recognise a Lon N-terminal domain in the interval 26 to 222 (LPMVVLGEMV…KVYLVLARQL (197 aa)). 375-382 (GPPGVGKT) provides a ligand contact to ATP. The 182-residue stretch at 617–798 (QDEVGVATGV…DEVLRIALSR (182 aa)) folds into the Lon proteolytic domain. Active-site residues include Ser704 and Lys747. The interval 800-824 (PTPANNQNGSHTNNRGQPSPAPAGT) is disordered. Residues 802 to 816 (PANNQNGSHTNNRGQ) show a composition bias toward polar residues.

It belongs to the peptidase S16 family. In terms of assembly, homohexamer. Organized in a ring with a central cavity.

It localises to the cytoplasm. The catalysed reaction is Hydrolysis of proteins in presence of ATP.. Its function is as follows. ATP-dependent serine protease that mediates the selective degradation of mutant and abnormal proteins as well as certain short-lived regulatory proteins. Required for cellular homeostasis and for survival from DNA damage and developmental changes induced by stress. Degrades polypeptides processively to yield small peptide fragments that are 5 to 10 amino acids long. Binds to DNA in a double-stranded, site-specific manner. In Chloroflexus aggregans (strain MD-66 / DSM 9485), this protein is Lon protease.